Here is a 454-residue protein sequence, read N- to C-terminus: Rhizobactin siderophore biosynthesis protein RhbE (454 aa).

Residue 7 to 13 (AGIGIGP) coordinates FAD.

The protein belongs to the lysine N(6)-hydroxylase/L-ornithine N(5)-oxygenase family. The cofactor is FAD.

The protein operates within siderophore biosynthesis; rhizobactin biosynthesis. The polypeptide is Rhizobactin siderophore biosynthesis protein RhbE (rhbE) (Rhizobium meliloti (strain 1021) (Ensifer meliloti)).